Consider the following 183-residue polypeptide: Ribosome-recycling factor (183 aa).

Belongs to the RRF family.

It localises to the cytoplasm. Functionally, responsible for the release of ribosomes from messenger RNA at the termination of protein biosynthesis. May increase the efficiency of translation by recycling ribosomes from one round of translation to another. The chain is Ribosome-recycling factor from Deinococcus radiodurans (strain ATCC 13939 / DSM 20539 / JCM 16871 / CCUG 27074 / LMG 4051 / NBRC 15346 / NCIMB 9279 / VKM B-1422 / R1).